We begin with the raw amino-acid sequence, 318 residues long: NAD kinase (318 aa).

The active-site Proton acceptor is aspartate 80. Residues 80 to 81, arginine 85, 155 to 156, aspartate 185, and 196 to 201 contribute to the NAD(+) site; these read DG, NE, and TAYAFS.

This sequence belongs to the NAD kinase family. Requires a divalent metal cation as cofactor.

Its subcellular location is the cytoplasm. It catalyses the reaction NAD(+) + ATP = ADP + NADP(+) + H(+). Functionally, involved in the regulation of the intracellular balance of NAD and NADP, and is a key enzyme in the biosynthesis of NADP. Catalyzes specifically the phosphorylation on 2'-hydroxyl of the adenosine moiety of NAD to yield NADP. This is NAD kinase from Corynebacterium efficiens (strain DSM 44549 / YS-314 / AJ 12310 / JCM 11189 / NBRC 100395).